Reading from the N-terminus, the 473-residue chain is H(+)/Cl(-) exchange transporter ClcA (473 aa).

Over 1–32 (MKTDTPTFEAQQIVRLRRGRLIRRLVQRDKTP) the chain is Cytoplasmic. The chain crosses the membrane as a helical span at residues 33-69 (LAILLMAAVVGTLTGLVGVAFEKAVSWVQNMRIGALV). Over 70-76 (QVADHAF) the chain is Periplasmic. The chain crosses the membrane as a helical span at residues 77 to 100 (LLWPLAFILSALLAMVGYFLVRKF). Residues 106 to 110 (GSGIP) carry the Selectivity filter part_1 motif. S107 provides a ligand contact to chloride. The helical intramembrane region spans 109 to 116 (IPEIEGAL). Residues 117-123 (EELRPVR) lie on the Cytoplasmic side of the membrane. Transmembrane regions (helical) follow at residues 124–141 (WWRVLPVKFIGGMGTLGA) and 148–166 (EGPTVQIGGNLGRMVLDVF). The short motif at 146–150 (GREGP) is the Selectivity filter part_2 element. Over 167–176 (RMRSAEARHT) the chain is Cytoplasmic. Intramembrane regions (helical) lie at residues 177–189 (LLATGAAAGLSAA) and 193–201 (PLAGILFII). Residues 202-214 (EEMRPQFRYNLIS) are Cytoplasmic-facing. Residues 215-232 (IKAVFTGVIMSSIVFRIF) traverse the membrane as a helical segment. The Periplasmic segment spans residues 233-252 (NGEAPIIEVGKLSNAPVNTL). A helical membrane pass occupies residues 253–281 (WLYLVLGIIFGCVGPVFNTLVLRTQDMFQ). The Cytoplasmic portion of the chain corresponds to 282 to 287 (RFHGGE). A helical transmembrane segment spans residues 288 to 309 (IKKWVLMGGAIGGLCGILGLIE). The Periplasmic segment spans residues 310-329 (PEAAGGGFNLIPIAAAGNFS). Transmembrane regions (helical) follow at residues 330-349 (VGLLLFIFITRVVTTLLCFS) and 355-376 (GIFAPMLALGTLLGTAFGMAAA). Positions 355–359 (GIFAP) match the Selectivity filter part_3 motif. Chloride contacts are provided by I356 and F357. Over 377 to 386 (VLFPQYHLEA) the chain is Periplasmic. An intramembrane region (helical) is located at residues 387 to 401 (GTFAIAGMGALMAAS). The note=Loop between two helices intramembrane region spans 402-404 (VRA). An intramembrane region (helical) is located at residues 405 to 416 (PLTGIVLVLEMT). Residues 417–421 (DNYQL) constitute an intramembrane region (note=Loop between two helices). A helical transmembrane segment spans residues 422–438 (ILPMIITCLGATLLAQF). At 439–473 (LGGKPLYSTILARTLAKQDAEQAAKNQSTPAGENT) the chain is on the cytoplasmic side. Y445 contacts chloride.

The protein belongs to the chloride channel (TC 2.A.49) family. ClcA subfamily. Homodimer.

The protein localises to the cell inner membrane. It catalyses the reaction 2 chloride(in) + H(+)(out) = 2 chloride(out) + H(+)(in). In terms of biological role, proton-coupled chloride transporter. Functions as antiport system and exchanges two chloride ions for 1 proton. Probably acts as an electrical shunt for an outwardly-directed proton pump that is linked to amino acid decarboxylation, as part of the extreme acid resistance (XAR) response. The chain is H(+)/Cl(-) exchange transporter ClcA from Salmonella arizonae (strain ATCC BAA-731 / CDC346-86 / RSK2980).